Reading from the N-terminus, the 559-residue chain is Urocanate hydratase (559 aa).

Residues 50–51, Gln-128, 174–176, Asp-194, Arg-199, 240–241, 261–265, 271–272, and Tyr-320 contribute to the NAD(+) site; these read GG, GMG, NA, QTSAH, and YI. Cys-408 is a catalytic residue. Gly-490 is an NAD(+) binding site.

It belongs to the urocanase family. It depends on NAD(+) as a cofactor.

Its subcellular location is the cytoplasm. The enzyme catalyses 4-imidazolone-5-propanoate = trans-urocanate + H2O. It participates in amino-acid degradation; L-histidine degradation into L-glutamate; N-formimidoyl-L-glutamate from L-histidine: step 2/3. In terms of biological role, catalyzes the conversion of urocanate to 4-imidazolone-5-propionate. This Halalkalibacterium halodurans (strain ATCC BAA-125 / DSM 18197 / FERM 7344 / JCM 9153 / C-125) (Bacillus halodurans) protein is Urocanate hydratase.